A 192-amino-acid chain; its full sequence is Group XIIA secretory phospholipase A2 (192 aa).

The first 25 residues, 1–25, serve as a signal peptide directing secretion; that stretch reads MVTPRPAPARSPALLLLLLLATARG. The Ca(2+) site is built by Gly-91, Pro-93, and Phe-95. His-113 is a catalytic residue. Asp-114 contributes to the Ca(2+) binding site. Asp-128 is a catalytic residue.

The protein belongs to the phospholipase A2 family. Ca(2+) serves as cofactor.

The protein resides in the secreted. It is found in the cytoplasm. The enzyme catalyses a 1,2-diacyl-sn-glycero-3-phosphocholine + H2O = a 1-acyl-sn-glycero-3-phosphocholine + a fatty acid + H(+). Its function is as follows. PA2 catalyzes the calcium-dependent hydrolysis of the 2-acyl groups in 3-sn-phosphoglycerides. Does not exhibit detectable activity toward sn-2-arachidonoyl- or linoleoyl-phosphatidylcholine or -phosphatidylethanolamine. The polypeptide is Group XIIA secretory phospholipase A2 (Pla2g12a) (Mus musculus (Mouse)).